The following is a 362-amino-acid chain: Serine/threonine-protein kinase ZRK4 (362 aa).

Positions 1 to 23 are disordered; that stretch reads MNDQKMSCWRKKSKKKNSEANQR. Residues 35-362 form the Protein kinase domain; the sequence is LEDLIELCNG…KELKRIERWT (328 aa). ATP is bound by residues 41–49 and Lys-89; that span reads LCNGKSNPI. The active-site Proton acceptor is Asp-185.

This sequence belongs to the protein kinase superfamily. Ser/Thr protein kinase family. ZRK subfamily.

The enzyme catalyses L-seryl-[protein] + ATP = O-phospho-L-seryl-[protein] + ADP + H(+). It catalyses the reaction L-threonyl-[protein] + ATP = O-phospho-L-threonyl-[protein] + ADP + H(+). In Arabidopsis thaliana (Mouse-ear cress), this protein is Serine/threonine-protein kinase ZRK4.